We begin with the raw amino-acid sequence, 348 residues long: NAC domain-containing protein 101 (348 aa).

The 150-residue stretch at 7–156 (IPPGYRFHPT…GWVVCRAFKK (150 aa)) folds into the NAC domain. A DNA-binding region spans residues 107 to 162 (VGMRKTLVFYKGRAPNGQKSDWIMHEYRLETDENGPPHEEGWVVCRAFKKKLTTMN). The tract at residues 325–348 (MVSMNASSSSSPCSFYSWAQNTHT) is disordered. The segment covering 327-341 (SMNASSSSSPCSFYS) has biased composition (low complexity).

Belongs to the plant vascular related NAC-domain protein family. Homodimer. As to expression, expressed in root inner metaxylem vessels and in hypocotyl vessels. Present in root developing xylems. Accumulates in the xylem but not in interfascicular fibers or pith cells in inflorescence stems. Absent from secondary xylem in roots.

The protein localises to the nucleus. In terms of biological role, transcription activator that binds to the secondary wall NAC binding element (SNBE), 5'-(T/A)NN(C/T)(T/C/G)TNNNNNNNA(A/C)GN(A/C/T)(A/T)-3', and to the tracheary elements (TE) specific regulating cis-element (TERE), 5'-CTTNAAAGCNA-3', in the promoter of target genes (e.g. genes involved in secondary wall biosynthesis, cell wall modification such as xylan accumulation, and programmed cell death). Involved in xylem formation in roots and shoots, especially regulating metaxylem vessel differentiation by promoting immature xylem vessel-specific genes expression, especially genes regulating programmed cell death (PCD) and secondary wall formation in tracheary elements (TE). Can activate MYB25, MYB46, MYB58, MYB63, MYB83, MYB103, CESA4, LBD15, LBD30, ERF115, XCP1, XCP2, NAC010/SND3, KNAT7, ASL19 and ASL20 expression. The protein is NAC domain-containing protein 101 of Arabidopsis thaliana (Mouse-ear cress).